Here is a 347-residue protein sequence, read N- to C-terminus: Phosphate acyltransferase (347 aa).

This sequence belongs to the PlsX family. As to quaternary structure, homodimer. Probably interacts with PlsY.

The protein localises to the cytoplasm. The catalysed reaction is a fatty acyl-[ACP] + phosphate = an acyl phosphate + holo-[ACP]. It participates in lipid metabolism; phospholipid metabolism. Its function is as follows. Catalyzes the reversible formation of acyl-phosphate (acyl-PO(4)) from acyl-[acyl-carrier-protein] (acyl-ACP). This enzyme utilizes acyl-ACP as fatty acyl donor, but not acyl-CoA. The protein is Phosphate acyltransferase of Anaplasma marginale (strain St. Maries).